The chain runs to 234 residues: Covalently-linked cell wall protein 14 (234 aa).

The N-terminal stretch at 1 to 22 is a signal peptide; that stretch reads MASFLKISTLIAIVSTLQTTLA. In terms of domain architecture, CFEM spans 23-109; the sequence is APPACLLACV…SSEESSASAS (87 aa). 4 cysteine pairs are disulfide-bonded: Cys27-Cys66, Cys31-Cys61, Cys41-Cys49, and Cys51-Cys82. Position 46 (Asp46) interacts with heme. Residues 86–207 show a composition bias toward low complexity; that stretch reads SSQSSSSESE…ASSSESTTAT (122 aa). The disordered stretch occupies residues 86–208; that stretch reads SSQSSSSESE…SSSESTTATG (123 aa). The GPI-anchor amidated glycine moiety is linked to residue Gly215. Positions 216 to 234 are cleaved as a propeptide — removed in mature form; that stretch reads SAAKVGLGALVGLVGAVLL.

This sequence belongs to the CCW14 family. Post-translationally, the GPI-anchor is attached to the protein in the endoplasmic reticulum and serves to target the protein to the cell surface. There, the glucosamine-inositol phospholipid moiety is cleaved off and the GPI-modified mannoprotein is covalently attached via its lipidless GPI glycan remnant to the 1,6-beta-glucan of the outer cell wall layer.

It localises to the secreted. Its subcellular location is the cell wall. The protein resides in the membrane. In terms of biological role, beta-glucan associated cell wall protein involved in cell wall structure. May serve as cross-linking or coat-forming wall protein. The polypeptide is Covalently-linked cell wall protein 14 (SSR1) (Candida albicans (strain SC5314 / ATCC MYA-2876) (Yeast)).